The sequence spans 224 residues: N-terminal Xaa-Pro-Lys N-methyltransferase 1-A (224 aa).

Residues Gly-70, Arg-75, 92 to 94, 120 to 121, and Gln-136 contribute to the S-adenosyl-L-methionine site; these read DVT and LQ.

This sequence belongs to the methyltransferase superfamily. NTM1 family.

It localises to the nucleus. The catalysed reaction is N-terminal L-alanyl-L-prolyl-L-lysyl-[protein] + 3 S-adenosyl-L-methionine = N-terminal N,N,N-trimethyl-L-alanyl-L-prolyl-L-lysyl-[protein] + 3 S-adenosyl-L-homocysteine + 3 H(+). It carries out the reaction N-terminal L-seryl-L-prolyl-L-lysyl-[protein] + 3 S-adenosyl-L-methionine = N-terminal N,N,N-trimethyl-L-seryl-L-prolyl-L-lysyl-[protein] + 3 S-adenosyl-L-homocysteine + 3 H(+). The enzyme catalyses N-terminal L-prolyl-L-prolyl-L-lysyl-[protein] + 2 S-adenosyl-L-methionine = N-terminal N,N-dimethyl-L-prolyl-L-prolyl-L-lysyl-[protein] + 2 S-adenosyl-L-homocysteine + 2 H(+). Its function is as follows. Distributive alpha-N-methyltransferase that methylates the N-terminus of target proteins containing the N-terminal motif [Ala/Gly/Pro/Ser]-Pro-Lys when the initiator Met is cleaved. Specifically catalyzes mono-, di- or tri-methylation of the exposed alpha-amino group of the Ala, Gly or Ser residue in the [Ala/Gly/Ser]-Pro-Lys motif and mono- or di-methylation of Pro in the Pro-Pro-Lys motif. Required during mitosis for normal bipolar spindle formation and chromosome segregation via its action on target proteins. This Xenopus laevis (African clawed frog) protein is N-terminal Xaa-Pro-Lys N-methyltransferase 1-A (ntmt1-a).